The sequence spans 457 residues: uncharacterized protein (457 aa).

The N-terminal stretch at 1-18 (MKLLISLLWSIFFSIVYS) is a signal peptide. The Lumenal portion of the chain corresponds to 19-173 (EKTLLNFKHY…GGLPASQFPR (155 aa)). The helical transmembrane segment at 174 to 194 (MPISGGITIAYSVILALWMFF) threads the bilayer. Residues 195–207 (RFQYKHSIVTVQK) are Cytoplasmic-facing. A helical transmembrane segment spans residues 208 to 228 (AIMFLLIFSCAQQAVTSIVLD). The Lumenal segment spans residues 229-243 (TENLRNRGNFTWLGE). A helical transmembrane segment spans residues 244–264 (TLVSILFACQLVLDLALLLIL). The Cytoplasmic segment spans residues 265-284 (SWGYTRYSTNMRDRLFTEAK). Residues 285-305 (IPLIICFFALFVVRFFAITIQ) traverse the membrane as a helical segment. At 306 to 314 (SIHLGLWFC) the chain is on the lumenal side. A helical membrane pass occupies residues 315 to 335 (FFFLTACISALYILFGAFVAL). Topologically, residues 336-358 (PSTLRALVEQRYYTLHSIYKIFR) are cytoplasmic. A helical membrane pass occupies residues 359 to 379 (IMVLCGVVTIFSFSLVALIFC). At 380 to 457 (SNTNNNSTNK…EEDIRADKSK (78 aa)) the chain is on the lumenal side.

It belongs to the LU7TM family.

The protein localises to the endoplasmic reticulum membrane. This is an uncharacterized protein from Schizosaccharomyces pombe (strain 972 / ATCC 24843) (Fission yeast).